We begin with the raw amino-acid sequence, 373 residues long: Dual-specificity RNA methyltransferase RlmN (373 aa).

The active-site Proton acceptor is Glu101. A Radical SAM core domain is found at 107–350; it reads ENKRTTLCVS…TIIRKIRGAD (244 aa). Cysteines 114 and 355 form a disulfide. Residues Cys121, Cys125, and Cys128 each coordinate [4Fe-4S] cluster. S-adenosyl-L-methionine-binding positions include 179–180, Ser211, 233–235, and Asn312; these read GE and SLH. Residue Cys355 is the S-methylcysteine intermediate of the active site.

This sequence belongs to the radical SAM superfamily. RlmN family. [4Fe-4S] cluster serves as cofactor.

It is found in the cytoplasm. The catalysed reaction is adenosine(2503) in 23S rRNA + 2 reduced [2Fe-2S]-[ferredoxin] + 2 S-adenosyl-L-methionine = 2-methyladenosine(2503) in 23S rRNA + 5'-deoxyadenosine + L-methionine + 2 oxidized [2Fe-2S]-[ferredoxin] + S-adenosyl-L-homocysteine. It catalyses the reaction adenosine(37) in tRNA + 2 reduced [2Fe-2S]-[ferredoxin] + 2 S-adenosyl-L-methionine = 2-methyladenosine(37) in tRNA + 5'-deoxyadenosine + L-methionine + 2 oxidized [2Fe-2S]-[ferredoxin] + S-adenosyl-L-homocysteine. Its function is as follows. Specifically methylates position 2 of adenine 2503 in 23S rRNA and position 2 of adenine 37 in tRNAs. m2A2503 modification seems to play a crucial role in the proofreading step occurring at the peptidyl transferase center and thus would serve to optimize ribosomal fidelity. The sequence is that of Dual-specificity RNA methyltransferase RlmN from Blochmanniella pennsylvanica (strain BPEN).